Here is a 201-residue protein sequence, read N- to C-terminus: Adenylyl-sulfate kinase (201 aa).

35-42 (GLSGSGKS) contributes to the ATP binding site. Serine 109 functions as the Phosphoserine intermediate in the catalytic mechanism.

The protein belongs to the APS kinase family.

It carries out the reaction adenosine 5'-phosphosulfate + ATP = 3'-phosphoadenylyl sulfate + ADP + H(+). It participates in sulfur metabolism; hydrogen sulfide biosynthesis; sulfite from sulfate: step 2/3. Catalyzes the synthesis of activated sulfate. This Salmonella arizonae (strain ATCC BAA-731 / CDC346-86 / RSK2980) protein is Adenylyl-sulfate kinase.